Reading from the N-terminus, the 592-residue chain is Glutamine--fructose-6-phosphate aminotransferase [isomerizing] (592 aa).

The Nucleophile; for GATase activity role is filled by Cys2. Residues 2-217 (CGIVGYVGRD…DGEIADLTPD (216 aa)) enclose the Glutamine amidotransferase type-2 domain. 2 consecutive SIS domains span residues 277–416 (IPFK…EREN) and 441–582 (VAEK…VDQP). Lys587 serves as the catalytic For Fru-6P isomerization activity.

Homodimer.

It localises to the cytoplasm. It carries out the reaction D-fructose 6-phosphate + L-glutamine = D-glucosamine 6-phosphate + L-glutamate. Catalyzes the first step in hexosamine metabolism, converting fructose-6P into glucosamine-6P using glutamine as a nitrogen source. The polypeptide is Glutamine--fructose-6-phosphate aminotransferase [isomerizing] (Aquifex aeolicus (strain VF5)).